Reading from the N-terminus, the 368-residue chain is Probable dual-specificity RNA methyltransferase RlmN (368 aa).

Catalysis depends on Glu111, which acts as the Proton acceptor. In terms of domain architecture, Radical SAM core spans 117–355; the sequence is YPNRATLCIS…CTVRDTRGQE (239 aa). The cysteines at positions 124 and 360 are disulfide-linked. [4Fe-4S] cluster contacts are provided by Cys131, Cys135, and Cys138. Residues 181–182, Ser215, 238–240, and Asn317 contribute to the S-adenosyl-L-methionine site; these read GE and SLH. The active-site S-methylcysteine intermediate is Cys360.

It belongs to the radical SAM superfamily. RlmN family. The cofactor is [4Fe-4S] cluster.

It localises to the cytoplasm. The catalysed reaction is adenosine(2503) in 23S rRNA + 2 reduced [2Fe-2S]-[ferredoxin] + 2 S-adenosyl-L-methionine = 2-methyladenosine(2503) in 23S rRNA + 5'-deoxyadenosine + L-methionine + 2 oxidized [2Fe-2S]-[ferredoxin] + S-adenosyl-L-homocysteine. It catalyses the reaction adenosine(37) in tRNA + 2 reduced [2Fe-2S]-[ferredoxin] + 2 S-adenosyl-L-methionine = 2-methyladenosine(37) in tRNA + 5'-deoxyadenosine + L-methionine + 2 oxidized [2Fe-2S]-[ferredoxin] + S-adenosyl-L-homocysteine. Its function is as follows. Specifically methylates position 2 of adenine 2503 in 23S rRNA and position 2 of adenine 37 in tRNAs. The polypeptide is Probable dual-specificity RNA methyltransferase RlmN (Corynebacterium diphtheriae (strain ATCC 700971 / NCTC 13129 / Biotype gravis)).